Reading from the N-terminus, the 586-residue chain is Aspartate--tRNA(Asp/Asn) ligase (586 aa).

Glu-172 lines the L-aspartate pocket. The tract at residues 196-199 (QLYK) is aspartate. Arg-218 lines the L-aspartate pocket. ATP is bound by residues 218–220 (RDE) and Gln-227. Residue His-446 coordinates L-aspartate. Glu-480 contacts ATP. Arg-487 contacts L-aspartate. 532–535 (GIDR) serves as a coordination point for ATP.

It belongs to the class-II aminoacyl-tRNA synthetase family. Type 1 subfamily. Homodimer.

The protein localises to the cytoplasm. The enzyme catalyses tRNA(Asx) + L-aspartate + ATP = L-aspartyl-tRNA(Asx) + AMP + diphosphate. Functionally, aspartyl-tRNA synthetase with relaxed tRNA specificity since it is able to aspartylate not only its cognate tRNA(Asp) but also tRNA(Asn). Reaction proceeds in two steps: L-aspartate is first activated by ATP to form Asp-AMP and then transferred to the acceptor end of tRNA(Asp/Asn). This is Aspartate--tRNA(Asp/Asn) ligase from Borreliella burgdorferi (strain ATCC 35210 / DSM 4680 / CIP 102532 / B31) (Borrelia burgdorferi).